We begin with the raw amino-acid sequence, 462 residues long: MSAEPHPLYRQLPAIDRLLNEPEMAPLLAEYGPVLLADTLRQLQAEAREYIGQFHTLADWCADWPAALRQRLNQRQPALKPVFNLTGTVLHTNLGRAPLAESAIAAVTDAMRSAVTLEYSLEGAGRGHRDRAVADLLCALTGAEDACIVNNNAAAVFLLLTVMAAGKQVVVSRGELVEIGGAFRIPDVMRQAGCELVEVGTTNRTHLKDYRQAINENTGLLMKVHTSNYSIEGFTAAVSEQQLAALGQECSIPTATDLGSGSLVDMTRYGLPAEPMPQQLIAAGVDLVTFSGDKLLGGPQAGIILGKKQWIERLQQHPLKRALRADKMTLAALDATLRLYQQPDRLVEQLPSLRLLTRPASEIAACAQRLLAPLIACYGTDFTLDIESCWSQIGSGSLPVDRLPSWALTFTPKDGRGSTLEALTARWRTLTKPVIGRVADGRLWLDLRCLEDEAALLRELAS.

K294 carries the N6-(pyridoxal phosphate)lysine modification.

This sequence belongs to the SelA family. As to quaternary structure, homodecamer; pentamer of dimers. Binds only one seryl-tRNA(Sec) per dimer. The cofactor is pyridoxal 5'-phosphate.

The protein localises to the cytoplasm. It catalyses the reaction L-seryl-tRNA(Sec) + selenophosphate + H(+) = L-selenocysteinyl-tRNA(Sec) + phosphate. It participates in aminoacyl-tRNA biosynthesis; selenocysteinyl-tRNA(Sec) biosynthesis; selenocysteinyl-tRNA(Sec) from L-seryl-tRNA(Sec) (bacterial route): step 1/1. Functionally, converts seryl-tRNA(Sec) to selenocysteinyl-tRNA(Sec) required for selenoprotein biosynthesis. The chain is L-seryl-tRNA(Sec) selenium transferase from Yersinia pestis bv. Antiqua (strain Antiqua).